A 594-amino-acid polypeptide reads, in one-letter code: Grainyhead-like protein 3 homolog (594 aa).

2 transcription activation regions span residues 25-75 and 28-91; these read NDDE…RIIT and EAWS…SCIE. Residues 220 to 453 form the Grh/CP2 DB domain; the sequence is ANRDFECTLE…DMETHPVLFI (234 aa). The disordered stretch occupies residues 483–503; it reads SSQSFPESFEAPPSKQQTNED.

Belongs to the grh/CP2 family. Grainyhead subfamily.

Its subcellular location is the nucleus. Functionally, transcription factor playing important roles in primary neurulation and in the differentiation of stratified epithelia of both ectodermal and endodermal origin. Binds directly to the consensus DNA sequence 5'-AACCGGTT-3' acting as an activator and repressor on distinct target genes. In Xenopus tropicalis (Western clawed frog), this protein is Grainyhead-like protein 3 homolog (grhl3).